We begin with the raw amino-acid sequence, 716 residues long: Polyribonucleotide nucleotidyltransferase (716 aa).

Residues Asp-495 and Asp-501 each coordinate Mg(2+). The 60-residue stretch at Pro-562 to Ile-621 folds into the KH domain. Residues Gly-631 to Lys-699 form the S1 motif domain.

The protein belongs to the polyribonucleotide nucleotidyltransferase family. Mg(2+) serves as cofactor.

It is found in the cytoplasm. It catalyses the reaction RNA(n+1) + phosphate = RNA(n) + a ribonucleoside 5'-diphosphate. In terms of biological role, involved in mRNA degradation. Catalyzes the phosphorolysis of single-stranded polyribonucleotides processively in the 3'- to 5'-direction. This is Polyribonucleotide nucleotidyltransferase from Synechococcus elongatus (strain ATCC 33912 / PCC 7942 / FACHB-805) (Anacystis nidulans R2).